The chain runs to 358 residues: Methylthioribose-1-phosphate isomerase (358 aa).

Residues 54–56 (RGA), arginine 96, and glutamine 205 each bind substrate. Aspartate 246 functions as the Proton donor in the catalytic mechanism. Position 256 to 257 (256 to 257 (NK)) interacts with substrate.

Belongs to the eIF-2B alpha/beta/delta subunits family. MtnA subfamily.

It catalyses the reaction 5-(methylsulfanyl)-alpha-D-ribose 1-phosphate = 5-(methylsulfanyl)-D-ribulose 1-phosphate. It functions in the pathway amino-acid biosynthesis; L-methionine biosynthesis via salvage pathway; L-methionine from S-methyl-5-thio-alpha-D-ribose 1-phosphate: step 1/6. Catalyzes the interconversion of methylthioribose-1-phosphate (MTR-1-P) into methylthioribulose-1-phosphate (MTRu-1-P). In Pseudomonas fluorescens (strain Pf0-1), this protein is Methylthioribose-1-phosphate isomerase.